The sequence spans 245 residues: 1-(5-phosphoribosyl)-5-[(5-phosphoribosylamino)methylideneamino] imidazole-4-carboxamide isomerase (245 aa).

The Proton acceptor role is filled by Asp7. The active-site Proton donor is the Asp129.

This sequence belongs to the HisA/HisF family.

The protein localises to the cytoplasm. The catalysed reaction is 1-(5-phospho-beta-D-ribosyl)-5-[(5-phospho-beta-D-ribosylamino)methylideneamino]imidazole-4-carboxamide = 5-[(5-phospho-1-deoxy-D-ribulos-1-ylimino)methylamino]-1-(5-phospho-beta-D-ribosyl)imidazole-4-carboxamide. The protein operates within amino-acid biosynthesis; L-histidine biosynthesis; L-histidine from 5-phospho-alpha-D-ribose 1-diphosphate: step 4/9. The protein is 1-(5-phosphoribosyl)-5-[(5-phosphoribosylamino)methylideneamino] imidazole-4-carboxamide isomerase of Shewanella piezotolerans (strain WP3 / JCM 13877).